We begin with the raw amino-acid sequence, 100 residues long: MITLSHYLVVAALMFVLGLIGIMKRNNLIMLFFSSEILLNAANVALAAISKFYNDITGQIFALFIVAVAASEVAVGLGLLILWYKKTGSIELSSMNNMRD.

3 helical membrane-spanning segments follow: residues 2 to 22, 29 to 49, and 63 to 83; these read ITLS…LIGI, IMLF…LAAI, and LFIV…LILW.

It belongs to the complex I subunit 4L family. As to quaternary structure, NDH-1 is composed of 14 different subunits. Subunits NuoA, H, J, K, L, M, N constitute the membrane sector of the complex.

The protein resides in the cell inner membrane. It catalyses the reaction a quinone + NADH + 5 H(+)(in) = a quinol + NAD(+) + 4 H(+)(out). NDH-1 shuttles electrons from NADH, via FMN and iron-sulfur (Fe-S) centers, to quinones in the respiratory chain. The immediate electron acceptor for the enzyme in this species is believed to be ubiquinone. Couples the redox reaction to proton translocation (for every two electrons transferred, four hydrogen ions are translocated across the cytoplasmic membrane), and thus conserves the redox energy in a proton gradient. The polypeptide is NADH-quinone oxidoreductase subunit K (Campylobacter curvus (strain 525.92)).